Consider the following 213-residue polypeptide: StAR-related lipid transfer protein 5 (213 aa).

The START domain maps to 1 to 213 (MDPALAAQMS…LQKAVKQFHE (213 aa)).

Its function is as follows. May be involved in the intracellular transport of sterols or other lipids. May bind cholesterol or other sterols. This chain is StAR-related lipid transfer protein 5 (STARD5), found in Homo sapiens (Human).